A 127-amino-acid chain; its full sequence is uncharacterized protein (127 aa).

An N-terminal signal peptide occupies residues 1–16; sequence MLKKIIFGITISLTTG. Residue cysteine 17 is the site of N-palmitoyl cysteine attachment. Cysteine 17 carries S-diacylglycerol cysteine lipidation. Positions 56-101 form a coiled coil; the sequence is EVREEIQKYRVEIVDINKKKRELYNRLSKEAQSFLAEQQKYKQKLS. The interval 102–127 is disordered; the sequence is IPKLLIENDPKNNTANSKDNNDKDMK.

Its subcellular location is the cell membrane. This is an uncharacterized protein from Rickettsia prowazekii (strain Madrid E).